We begin with the raw amino-acid sequence, 363 residues long: DNA replication and repair protein RecF (363 aa).

Residue 30–37 (GDNAQGKT) participates in ATP binding.

It belongs to the RecF family.

The protein localises to the cytoplasm. The RecF protein is involved in DNA metabolism; it is required for DNA replication and normal SOS inducibility. RecF binds preferentially to single-stranded, linear DNA. It also seems to bind ATP. This Syntrophotalea carbinolica (strain DSM 2380 / NBRC 103641 / GraBd1) (Pelobacter carbinolicus) protein is DNA replication and repair protein RecF.